The primary structure comprises 634 residues: MSHTPKSAGSSHAPANSQTALVIGAIGVVFGDIGTSPLYTLKEAFSPHYGLTPDHDTVLGILSLVFWALMLVVTLKYVTVIMRADNDGEGGIMALTALAQRTLPGGSRSMYVVGILGIFGASLFFGDGVITPAISVLSAVEGLEVAAPRLEPFVVPITLVVLGMLFLAQRFGTERVGKAFGPITLLWFFALGAIGVYNMARAPEVLHALNPWWGVRFFAQHNWHAVFVLGAVVLAVTGGEALYADMGHFGAKAIRRSWQFVVLPMLTLTYLGQGALMLRNPAAVSNPFYEAVPEWALYPMIVLATAATVIASQALITGAYSVASQAMQLGYIPRMHIRHTSHSTIGQIYVPAVNWCLLALVAVAVIGFGDSASLATAYGVSVTGTMLITTVLMIIYARANPRVPAPLLWLFALVFLAVDCAFFYANIIKFLDGAWFPLLLGLILFTLMRTWRRGRKLLHDEIRKDGIKLDTFLPGLMLAPPVRVPGTAVFLTADPMVVPHALMHNLKHNKVLHERNVFLTVETLQVPYAAAGKRLKIDAIGDEFYRVHVRFGFMETPDVPLALMRSCDQGGIYFDPMDTTYFASRETIVASANRGMPIWRDKLFALMHRNAAPATGFFRIPGNRLVELGAQVEI.

12 helical membrane-spanning segments follow: residues 21 to 41 (LVIGAIGVVFGDIGTSPLYTL), 58 to 78 (VLGILSLVFWALMLVVTLKYV), 110 to 130 (MYVVGILGIFGASLFFGDGVI), 152 to 172 (PFVVPITLVVLGMLFLAQRFG), 179 to 199 (AFGPITLLWFFALGAIGVYNM), 223 to 243 (WHAVFVLGAVVLAVTGGEALY), 258 to 278 (WQFVVLPMLTLTYLGQGALML), 296 to 316 (ALYPMIVLATAATVIASQALI), 348 to 368 (IYVPAVNWCLLALVAVAVIGF), 377 to 397 (AYGVSVTGTMLITTVLMIIYA), 403 to 423 (VPAPLLWLFALVFLAVDCAFF), and 427 to 447 (IIKFLDGAWFPLLLGLILFTL).

It belongs to the HAK/KUP transporter (TC 2.A.72) family.

It is found in the cell inner membrane. It carries out the reaction K(+)(in) + H(+)(in) = K(+)(out) + H(+)(out). Its function is as follows. Transport of potassium into the cell. Likely operates as a K(+):H(+) symporter. In Xanthomonas euvesicatoria pv. vesicatoria (strain 85-10) (Xanthomonas campestris pv. vesicatoria), this protein is Probable potassium transport system protein Kup.